The chain runs to 281 residues: Succinate dehydrogenase [ubiquinone] iron-sulfur subunit 1, mitochondrial (281 aa).

A mitochondrion-targeting transit peptide spans 1–25 (MAAAALLRRSPAARALLSPALSSRL). The tract at residues 26-48 (VASKPHSSSPAPPPPPSKAGANT) is disordered. One can recognise a 2Fe-2S ferredoxin-type domain in the interval 49–141 (KTFSIYRWDP…ASTISPLPHM (93 aa)). [2Fe-2S] cluster contacts are provided by Cys102, Cys107, and Cys122. Residues 184–214 (DRAKLDGMYECILCACCSTSCPSYWWNPEEY) enclose the 4Fe-4S ferredoxin-type domain. Cys194, Cys197, and Cys200 together coordinate [4Fe-4S] cluster. Cys204 contacts [3Fe-4S] cluster. Trp209 provides a ligand contact to a ubiquinone. [3Fe-4S] cluster is bound by residues Cys251 and Cys257. Cys261 is a binding site for [4Fe-4S] cluster.

It belongs to the succinate dehydrogenase/fumarate reductase iron-sulfur protein family. As to quaternary structure, component of complex II composed of eight subunits in plants: four classical SDH subunits SDH1, SDH2, SDH3 and SDH4 (a flavoprotein (FP), an iron-sulfur protein (IP), and a cytochrome b composed of a large and a small subunit.), as well as four subunits unknown in mitochondria from bacteria and heterotrophic eukaryotes. [2Fe-2S] cluster is required as a cofactor. [3Fe-4S] cluster serves as cofactor. The cofactor is [4Fe-4S] cluster.

It is found in the mitochondrion inner membrane. The enzyme catalyses a quinone + succinate = fumarate + a quinol. It participates in carbohydrate metabolism; tricarboxylic acid cycle; fumarate from succinate (eukaryal route): step 1/1. Iron-sulfur protein (IP) subunit of succinate dehydrogenase (SDH) that is involved in complex II of the mitochondrial electron transport chain and is responsible for transferring electrons from succinate to ubiquinone (coenzyme Q). This Oryza sativa subsp. japonica (Rice) protein is Succinate dehydrogenase [ubiquinone] iron-sulfur subunit 1, mitochondrial.